The primary structure comprises 167 residues: uncharacterized protein (167 aa).

Residues 148–167 (NKESRGENDGGEERESANIY) form a disordered region.

This is an uncharacterized protein from Homo sapiens (Human).